A 334-amino-acid chain; its full sequence is uncharacterized protein (334 aa).

5 WD repeats span residues 56–86, 98–128, 139–169, 220–250, and 262–291; these read LKGEAIIQIHYSQDGNYLLSTATDGLAKLWT, KPVAMIFNGAFSRDGKAIITAGYNGVARIWD, GHTSAVTDVVFLSDDMGVVTSSDDGTIEGWS, TDQGRLNDVDFSQDGKLLVTAGFDGTARVFN, and LDDGWVTGVAINQDNLIATVSDDGILRVWN.

This is an uncharacterized protein from Synechocystis sp. (strain ATCC 27184 / PCC 6803 / Kazusa).